The sequence spans 401 residues: Nicotinate phosphoribosyltransferase (401 aa).

At H221 the chain carries Phosphohistidine; by autocatalysis.

It belongs to the NAPRTase family. Transiently phosphorylated on a His residue during the reaction cycle. Phosphorylation strongly increases the affinity for substrates and increases the rate of nicotinate D-ribonucleotide production. Dephosphorylation regenerates the low-affinity form of the enzyme, leading to product release.

It catalyses the reaction nicotinate + 5-phospho-alpha-D-ribose 1-diphosphate + ATP + H2O = nicotinate beta-D-ribonucleotide + ADP + phosphate + diphosphate. It functions in the pathway cofactor biosynthesis; NAD(+) biosynthesis; nicotinate D-ribonucleotide from nicotinate: step 1/1. Its function is as follows. Catalyzes the synthesis of beta-nicotinate D-ribonucleotide from nicotinate and 5-phospho-D-ribose 1-phosphate at the expense of ATP. The polypeptide is Nicotinate phosphoribosyltransferase (Edwardsiella ictaluri (strain 93-146)).